A 299-amino-acid chain; its full sequence is Coenzyme PQQ synthesis protein B (299 aa).

The protein belongs to the PqqB family.

It participates in cofactor biosynthesis; pyrroloquinoline quinone biosynthesis. In terms of biological role, may be involved in the transport of PQQ or its precursor to the periplasm. In Methylorubrum populi (strain ATCC BAA-705 / NCIMB 13946 / BJ001) (Methylobacterium populi), this protein is Coenzyme PQQ synthesis protein B.